A 138-amino-acid polypeptide reads, in one-letter code: DNA-directed RNA polymerase subunit omega (138 aa).

The tract at residues 117–138 (NLLGRDNFFSTPENRNTSNTDS) is disordered. Over residues 124–138 (FFSTPENRNTSNTDS) the composition is skewed to polar residues.

Belongs to the RNA polymerase subunit omega family. The RNAP catalytic core consists of 2 alpha, 1 beta, 1 beta' and 1 omega subunit. When a sigma factor is associated with the core the holoenzyme is formed, which can initiate transcription.

It carries out the reaction RNA(n) + a ribonucleoside 5'-triphosphate = RNA(n+1) + diphosphate. Functionally, promotes RNA polymerase assembly. Latches the N- and C-terminal regions of the beta' subunit thereby facilitating its interaction with the beta and alpha subunits. This Ehrlichia canis (strain Jake) protein is DNA-directed RNA polymerase subunit omega.